Reading from the N-terminus, the 103-residue chain is Large ribosomal subunit protein uL23 (103 aa).

The protein belongs to the universal ribosomal protein uL23 family. In terms of assembly, part of the 50S ribosomal subunit. Contacts protein L29, and trigger factor when it is bound to the ribosome.

In terms of biological role, one of the early assembly proteins it binds 23S rRNA. One of the proteins that surrounds the polypeptide exit tunnel on the outside of the ribosome. Forms the main docking site for trigger factor binding to the ribosome. This is Large ribosomal subunit protein uL23 from Chlorobaculum tepidum (strain ATCC 49652 / DSM 12025 / NBRC 103806 / TLS) (Chlorobium tepidum).